The following is a 562-amino-acid chain: Sesquiterpene synthase (562 aa).

Asp315, Asp319, and Glu467 together coordinate Mg(2+). The DDXXD motif signature appears at 315–319 (DDIYD).

This sequence belongs to the terpene synthase family. Tpsa subfamily. Requires Mg(2+) as cofactor. It depends on Mn(2+) as a cofactor.

In terms of biological role, catalyzes the formation of beta-elemol, guaiol and bulnesol. The chain is Sesquiterpene synthase from Santalum spicatum (Australian sandalwood).